Here is a 437-residue protein sequence, read N- to C-terminus: Histidinol dehydrogenase (437 aa).

Tyr137, Gln199, and Asn222 together coordinate NAD(+). Ser245, Gln267, and His270 together coordinate substrate. Zn(2+) contacts are provided by Gln267 and His270. Active-site proton acceptor residues include Glu335 and His336. Substrate-binding residues include His336, Asp369, Glu423, and His428. Asp369 is a Zn(2+) binding site. His428 serves as a coordination point for Zn(2+).

The protein belongs to the histidinol dehydrogenase family. It depends on Zn(2+) as a cofactor.

The catalysed reaction is L-histidinol + 2 NAD(+) + H2O = L-histidine + 2 NADH + 3 H(+). Its pathway is amino-acid biosynthesis; L-histidine biosynthesis; L-histidine from 5-phospho-alpha-D-ribose 1-diphosphate: step 9/9. Its function is as follows. Catalyzes the sequential NAD-dependent oxidations of L-histidinol to L-histidinaldehyde and then to L-histidine. This Parasynechococcus marenigrum (strain WH8102) protein is Histidinol dehydrogenase.